The primary structure comprises 319 residues: Chromoplast-specific carotenoid-associated protein C1, chromoplastic (319 aa).

A chromoplast-targeting transit peptide spans 1–55 (MTSIAFWNAFTVNPFPAAARRSPPPLTPFTSGALSPARKPRILEISHPRTLPSFR).

The protein belongs to the PAP/fibrillin family. In terms of tissue distribution, expressed in flower buds and floral lip tissues. Not detected in roots and leaves. Specifically expressed in conical papillate cells of adaxial epidermis of lip tissues.

It is found in the plastid. The protein localises to the chromoplast. Functionally, may be involved in carotenoid sequestration within chromoplasts. The chain is Chromoplast-specific carotenoid-associated protein C1, chromoplastic (CHRC1) from Oncidium hybrid cultivar (Orchid).